The primary structure comprises 236 residues: UPF0502 protein Bcenmc03_4618 (236 aa).

It belongs to the UPF0502 family.

This Burkholderia orbicola (strain MC0-3) protein is UPF0502 protein Bcenmc03_4618.